The following is a 147-amino-acid chain: Large ribosomal subunit protein uL13 (147 aa).

The protein belongs to the universal ribosomal protein uL13 family. In terms of assembly, part of the 50S ribosomal subunit.

Its function is as follows. This protein is one of the early assembly proteins of the 50S ribosomal subunit, although it is not seen to bind rRNA by itself. It is important during the early stages of 50S assembly. In Mycobacterium leprae (strain Br4923), this protein is Large ribosomal subunit protein uL13.